The following is a 310-amino-acid chain: Protein-L-isoaspartate O-methyltransferase (310 aa).

Disordered stretches follow at residues 1–46 and 60–79; these read MSGE…DKPA and ALPG…TVLK. A compositionally biased stretch (basic and acidic residues) spans 14-34; it reads EDLKRAPRKSEVRSGSGERHA. Residues 35–46 show a composition bias toward low complexity; it reads ASAVPKAADKPA. Ser-157 is an active-site residue.

Belongs to the methyltransferase superfamily. L-isoaspartyl/D-aspartyl protein methyltransferase family.

It is found in the cytoplasm. The catalysed reaction is [protein]-L-isoaspartate + S-adenosyl-L-methionine = [protein]-L-isoaspartate alpha-methyl ester + S-adenosyl-L-homocysteine. Its function is as follows. Catalyzes the methyl esterification of L-isoaspartyl residues in peptides and proteins that result from spontaneous decomposition of normal L-aspartyl and L-asparaginyl residues. It plays a role in the repair and/or degradation of damaged proteins. The sequence is that of Protein-L-isoaspartate O-methyltransferase from Burkholderia ambifaria (strain ATCC BAA-244 / DSM 16087 / CCUG 44356 / LMG 19182 / AMMD) (Burkholderia cepacia (strain AMMD)).